Reading from the N-terminus, the 441-residue chain is Glutamate-1-semialdehyde 2,1-aminomutase (441 aa).

Lysine 273 bears the N6-(pyridoxal phosphate)lysine mark.

This sequence belongs to the class-III pyridoxal-phosphate-dependent aminotransferase family. HemL subfamily. It depends on pyridoxal 5'-phosphate as a cofactor.

Its subcellular location is the cytoplasm. The catalysed reaction is (S)-4-amino-5-oxopentanoate = 5-aminolevulinate. The protein operates within porphyrin-containing compound metabolism; protoporphyrin-IX biosynthesis; 5-aminolevulinate from L-glutamyl-tRNA(Glu): step 2/2. The polypeptide is Glutamate-1-semialdehyde 2,1-aminomutase (Pyrobaculum calidifontis (strain DSM 21063 / JCM 11548 / VA1)).